We begin with the raw amino-acid sequence, 445 residues long: Probable D-serine dehydratase (445 aa).

An N6-(pyridoxal phosphate)lysine modification is found at Lys119.

This sequence belongs to the serine/threonine dehydratase family. DsdA subfamily. It depends on pyridoxal 5'-phosphate as a cofactor.

It carries out the reaction D-serine = pyruvate + NH4(+). The chain is Probable D-serine dehydratase from Pseudomonas putida (strain GB-1).